Reading from the N-terminus, the 195-residue chain is Thymidine kinase (195 aa).

ATP-binding positions include 15–22 and 88–91; these read GSMFSGKS and DEVQ. Glutamate 89 serves as the catalytic Proton acceptor. Residues cysteine 145, cysteine 148, cysteine 183, and cysteine 186 each contribute to the Zn(2+) site.

The protein belongs to the thymidine kinase family. In terms of assembly, homotetramer.

The protein resides in the cytoplasm. The enzyme catalyses thymidine + ATP = dTMP + ADP + H(+). The chain is Thymidine kinase from Bacillus cereus (strain ZK / E33L).